The chain runs to 381 residues: Cytochrome b (381 aa).

4 consecutive transmembrane segments (helical) span residues 34-54 (FGSL…FLAM), 78-99 (WLIR…YLHI), 114-134 (WNIG…GYVL), and 179-199 (FFAF…IHLL). Positions 84 and 98 each coordinate heme b. Positions 183 and 197 each coordinate heme b. Position 202 (H202) interacts with a ubiquinone. 4 consecutive transmembrane segments (helical) span residues 227–247 (YKDL…ALFM), 289–309 (LGGV…PLLH), 321–341 (MTQI…WIGG), and 348–368 (FMMV…IIMP).

The protein belongs to the cytochrome b family. The cytochrome bc1 complex contains 3 respiratory subunits (MT-CYB, CYC1 and UQCRFS1), 2 core proteins (UQCRC1 and UQCRC2) and probably 6 low-molecular weight proteins. Heme b serves as cofactor.

It is found in the mitochondrion inner membrane. In terms of biological role, component of the ubiquinol-cytochrome c reductase complex (complex III or cytochrome b-c1 complex) that is part of the mitochondrial respiratory chain. The b-c1 complex mediates electron transfer from ubiquinol to cytochrome c. Contributes to the generation of a proton gradient across the mitochondrial membrane that is then used for ATP synthesis. This is Cytochrome b (mt-cyb) from Prionace glauca (Blue shark).